The sequence spans 360 residues: Protein Wnt-2 (360 aa).

The first 37 residues, 1–37 (MIPRRSCWLILLLNLLNVQSLLDASWWSTVAQLSTAL), serve as a signal peptide directing secretion. Intrachain disulfides connect C80-C91, C130-C138, C140-C158, C213-C227, C215-C222, C289-C320, C305-C315, C319-C359, C335-C350, C337-C347, and C342-C343. N90 carries N-linked (GlcNAc...) asparagine glycosylation. The O-palmitoleoyl serine; by mom-1 moiety is linked to residue S219. An N-linked (GlcNAc...) asparagine glycan is attached at N352.

This sequence belongs to the Wnt family. Palmitoleoylation is required for efficient binding to frizzled receptors. Depalmitoleoylation leads to Wnt signaling pathway inhibition. As to expression, expressed in intestine, pharynx, anterior body wall muscle, vulva, some pharyngeal neurons and SMD head neurons. Expressed along the boundary between the intestine and muscle or hypodermis, but is also expressed in the hypodermis in cells including seam cells.

It is found in the secreted. The protein resides in the extracellular space. The protein localises to the extracellular matrix. Functionally, ligand for members of the frizzled family of seven transmembrane receptors. Probable developmental protein. May be a signaling molecule which affects the development of discrete regions of tissues. Is likely to signal over only few cell diameters. Involved in the correct positioning of the developing nerve ring and in axon guidance of SIA and SIB neurons, probably by binding to tyrosine kinase receptor cam-1. In addition, regulates the positioning of some head neuronal cells, muscle arms associated with the nerve ring and the excretory pore. Together with Wnt ligand cwn-1, regulates the migration of CAN, ALM, BDU and HSN neurons during embryogenesis, the migration of QL and QR neuroblast descendants during larval development, and polarity of ALM neurons. May act through the wnt receptor cfz-2 to regulate QR neuroblast descendant migration, and to direct ALM migration. Also plays a role in axon growth and guidance in HSN and male CP neurons. In addition, together with wnt ligand cwn-1, negatively regulates developmental neurite pruning of AIM neurons probably by acting as a ligand for receptor tyrosine kinase cam-1. Through the cam-1 receptor also probably regulates the outgrowth of neurites from RME GABAergic motor neurons. May act redundantly with other Wnt ligands such as cwn-1 and mom-2 to control seam cell polarity. The polypeptide is Protein Wnt-2 (Caenorhabditis elegans).